The sequence spans 49 residues: uncharacterized protein (49 aa).

The chain crosses the membrane as a helical span at residues 6–28 (IYPLTVFYFFAIEMSVFCYYNWF).

Its subcellular location is the membrane. This is an uncharacterized protein from Saccharomyces cerevisiae (strain ATCC 204508 / S288c) (Baker's yeast).